The following is a 181-amino-acid chain: Ribonuclease HII (181 aa).

The 181-residue stretch at 1–181 (MICGIDEVGR…NLHRRSFKFI (181 aa)) folds into the RNase H type-2 domain. Residues D6, E7, and D98 each contribute to the a divalent metal cation site.

The protein belongs to the RNase HII family. The cofactor is Mn(2+). Requires Mg(2+) as cofactor.

Its subcellular location is the cytoplasm. It carries out the reaction Endonucleolytic cleavage to 5'-phosphomonoester.. In terms of biological role, endonuclease that specifically degrades the RNA of RNA-DNA hybrids. This Borrelia hermsii (strain HS1 / DAH) protein is Ribonuclease HII.